The sequence spans 511 residues: Glucans biosynthesis protein G (511 aa).

Residues 1 to 22 (MMKMRWLGAAIMLTLYASSSWA) form the signal peptide.

The protein belongs to the OpgD/OpgG family.

The protein resides in the periplasm. It functions in the pathway glycan metabolism; osmoregulated periplasmic glucan (OPG) biosynthesis. Its function is as follows. Involved in the biosynthesis of osmoregulated periplasmic glucans (OPGs). The chain is Glucans biosynthesis protein G from Salmonella enteritidis PT4 (strain P125109).